The primary structure comprises 186 residues: MNVSKYVAIFSFVFIQLISVGKVFANADERMTTFRENIAQTWQQPEHYDLYIPAITWHARFAYDKEKTDRYNERPWGGGFGLSRWDEKGNWHGLYAMAFKDSWNKWEPIAGYGWESTWRPLADENFHLGLGFTAGVTARDNWNYIPLPVLLPLASVGYGPVTFQMTYIPGTYNNGNVYFAWMRFQF.

The first 25 residues, 1–25 (MNVSKYVAIFSFVFIQLISVGKVFA), serve as a signal peptide directing secretion. Catalysis depends on residues His-58, Asp-101, and Ser-102.

It belongs to the lipid A palmitoyltransferase family. In terms of assembly, homodimer.

The protein localises to the cell outer membrane. The enzyme catalyses a lipid A + a 1,2-diacyl-sn-glycero-3-phosphocholine = a hepta-acyl lipid A + a 2-acyl-sn-glycero-3-phosphocholine. It carries out the reaction a lipid IVA + a 1,2-diacyl-sn-glycero-3-phosphocholine = a lipid IVB + a 2-acyl-sn-glycero-3-phosphocholine. The catalysed reaction is a lipid IIA + a 1,2-diacyl-sn-glycero-3-phosphocholine = a lipid IIB + a 2-acyl-sn-glycero-3-phosphocholine. Functionally, transfers a fatty acid residue from the sn-1 position of a phospholipid to the N-linked hydroxyfatty acid chain on the proximal unit of lipid A or its precursors. The polypeptide is Lipid A acyltransferase PagP (Shigella flexneri serotype X (strain 2002017)).